Consider the following 484-residue polypeptide: Malonate-semialdehyde dehydrogenase 1 (484 aa).

NAD(+) is bound by residues F154, K178, E181, R182, and S231. Catalysis depends on C286, which acts as the Nucleophile. E384 is a binding site for NAD(+).

The protein belongs to the aldehyde dehydrogenase family. IolA subfamily. Homotetramer.

The catalysed reaction is 3-oxopropanoate + NAD(+) + CoA + H2O = hydrogencarbonate + acetyl-CoA + NADH + H(+). It carries out the reaction 2-methyl-3-oxopropanoate + NAD(+) + CoA + H2O = propanoyl-CoA + hydrogencarbonate + NADH + H(+). The protein operates within polyol metabolism; myo-inositol degradation into acetyl-CoA; acetyl-CoA from myo-inositol: step 7/7. Functionally, catalyzes the oxidation of malonate semialdehyde (MSA) and methylmalonate semialdehyde (MMSA) into acetyl-CoA and propanoyl-CoA, respectively. Is involved in a myo-inositol catabolic pathway. Bicarbonate, and not CO2, is the end-product of the enzymatic reaction. The sequence is that of Malonate-semialdehyde dehydrogenase 1 from Bacillus licheniformis (strain ATCC 14580 / DSM 13 / JCM 2505 / CCUG 7422 / NBRC 12200 / NCIMB 9375 / NCTC 10341 / NRRL NRS-1264 / Gibson 46).